We begin with the raw amino-acid sequence, 309 residues long: 4-hydroxy-3-methylbut-2-enyl diphosphate reductase (309 aa).

Residue Cys13 participates in [4Fe-4S] cluster binding. Positions 42 and 75 each coordinate (2E)-4-hydroxy-3-methylbut-2-enyl diphosphate. Residues His42 and His75 each coordinate dimethylallyl diphosphate. Positions 42 and 75 each coordinate isopentenyl diphosphate. Cys97 contributes to the [4Fe-4S] cluster binding site. Residue His125 participates in (2E)-4-hydroxy-3-methylbut-2-enyl diphosphate binding. His125 is a dimethylallyl diphosphate binding site. Residue His125 participates in isopentenyl diphosphate binding. The Proton donor role is filled by Glu127. Position 165 (Thr165) interacts with (2E)-4-hydroxy-3-methylbut-2-enyl diphosphate. Position 195 (Cys195) interacts with [4Fe-4S] cluster. The (2E)-4-hydroxy-3-methylbut-2-enyl diphosphate site is built by Ser223, Ser224, Asn225, and Ser267. Residues Ser223, Ser224, Asn225, and Ser267 each coordinate dimethylallyl diphosphate. Isopentenyl diphosphate contacts are provided by Ser223, Ser224, Asn225, and Ser267.

This sequence belongs to the IspH family. [4Fe-4S] cluster serves as cofactor.

The enzyme catalyses isopentenyl diphosphate + 2 oxidized [2Fe-2S]-[ferredoxin] + H2O = (2E)-4-hydroxy-3-methylbut-2-enyl diphosphate + 2 reduced [2Fe-2S]-[ferredoxin] + 2 H(+). It carries out the reaction dimethylallyl diphosphate + 2 oxidized [2Fe-2S]-[ferredoxin] + H2O = (2E)-4-hydroxy-3-methylbut-2-enyl diphosphate + 2 reduced [2Fe-2S]-[ferredoxin] + 2 H(+). It participates in isoprenoid biosynthesis; dimethylallyl diphosphate biosynthesis; dimethylallyl diphosphate from (2E)-4-hydroxy-3-methylbutenyl diphosphate: step 1/1. It functions in the pathway isoprenoid biosynthesis; isopentenyl diphosphate biosynthesis via DXP pathway; isopentenyl diphosphate from 1-deoxy-D-xylulose 5-phosphate: step 6/6. Functionally, catalyzes the conversion of 1-hydroxy-2-methyl-2-(E)-butenyl 4-diphosphate (HMBPP) into a mixture of isopentenyl diphosphate (IPP) and dimethylallyl diphosphate (DMAPP). Acts in the terminal step of the DOXP/MEP pathway for isoprenoid precursor biosynthesis. The chain is 4-hydroxy-3-methylbut-2-enyl diphosphate reductase from Chlamydia abortus (strain DSM 27085 / S26/3) (Chlamydophila abortus).